The sequence spans 572 residues: FAD-linked oxidoreductase patO (572 aa).

An N-terminal signal peptide occupies residues 1 to 23 (MRLSIYSSILLLRAMCLVRPTFG). N-linked (GlcNAc...) asparagine glycosylation is found at asparagine 48, asparagine 71, asparagine 126, asparagine 180, asparagine 309, asparagine 354, asparagine 381, asparagine 422, asparagine 446, and asparagine 481. One can recognise an FAD-binding PCMH-type domain in the interval 115–295 (CAPGDMVVYS…YSMTVKAFPD (181 aa)).

The protein belongs to the oxygen-dependent FAD-linked oxidoreductase family. The cofactor is FAD.

It is found in the vacuole lumen. It participates in mycotoxin biosynthesis; patulin biosynthesis. In terms of biological role, FAD-linked oxidoreductase; part of the gene cluster that mediates the biosynthesis of patulin, an acetate-derived tetraketide mycotoxin produced by several fungal species that shows antimicrobial properties against several bacteria. PatO acts with patJ in the vacuole to convert gentisyl alcohol to isoepoxydon. The pathway begins with the synthesis of 6-methylsalicylic acid by the polyketide synthase (PKS) patK via condensation of acetate and malonate units. The 6-methylsalicylic acid decarboxylase patG then catalyzes the decarboxylation of 6-methylsalicylic acid to yield m-cresol (also known as 3-methylphenol). These first reactions occur in the cytosol. The intermediate m-cresol is then transported into the endoplasmic reticulum where the cytochrome P450 monooxygenase patH converts it to m-hydroxybenzyl alcohol, which is further converted to gentisyl alcohol by the cytochrome P450 monooxygenase patI. The oxidoreductases patJ and patO further convert gentisyl alcohol to isoepoxydon in the vacuole. PatN catalyzes then the transformation of isoepoxydon into phyllostine. The cluster protein patF is responsible for the conversion from phyllostine to neopatulin whereas the alcohol dehydrogenase patD converts neopatulin to E-ascladiol. The steps between isoepoxydon and E-ascladiol occur in the cytosol, and E-ascladiol is probably secreted to the extracellular space by one of the cluster-specific transporters patC or patM. Finally, the secreted patulin synthase patE catalyzes the conversion of E-ascladiol to patulin. In Aspergillus clavatus (strain ATCC 1007 / CBS 513.65 / DSM 816 / NCTC 3887 / NRRL 1 / QM 1276 / 107), this protein is FAD-linked oxidoreductase patO.